We begin with the raw amino-acid sequence, 248 residues long: tRNA (guanine-N(1)-)-methyltransferase (248 aa).

S-adenosyl-L-methionine-binding positions include G117 and 137-142; that span reads IGDFVL.

The protein belongs to the RNA methyltransferase TrmD family. As to quaternary structure, homodimer.

It is found in the cytoplasm. The catalysed reaction is guanosine(37) in tRNA + S-adenosyl-L-methionine = N(1)-methylguanosine(37) in tRNA + S-adenosyl-L-homocysteine + H(+). Specifically methylates guanosine-37 in various tRNAs. This chain is tRNA (guanine-N(1)-)-methyltransferase, found in Polynucleobacter necessarius subsp. necessarius (strain STIR1).